Here is a 27-residue protein sequence, read N- to C-terminus: Conotoxin as14a (27 aa).

2 disulfide bridges follow: Cys6–Cys26 and Cys10–Cys22.

Belongs to the conotoxin L superfamily. As to expression, expressed by the venom duct.

The protein localises to the secreted. In terms of biological role, in vivo, intracranial injection, elicits scratching and grooming activity in mice. The sequence is that of Conotoxin as14a from Conus cancellatus (Cancellate cone).